The following is a 1219-amino-acid chain: FK506-binding protein 15 (1219 aa).

Met-1 bears the N-acetylmethionine mark. Residues Ser-14 and Ser-23 each carry the phosphoserine modification. The tract at residues 41-66 (YTAPKQPKKGQGTAATGNQATPKTAP) is disordered. Polar residues predominate over residues 53–66 (TAATGNQATPKTAP). The tract at residues 72–169 (PTILVATAVH…AVEFNKQVCI (98 aa)) is important for function in growth cone organization. At Lys-92 the chain carries N6-acetyllysine. The 94-residue stretch at 197–290 (GDSLEVAYTG…VFEVEVRRVK (94 aa)) folds into the PPIase FKBP-type domain. Residues 294 to 349 (DSGSDGHSVSSRDSAAPSPIPGADNLSADPVVSPPTSIPFKSGEPALRTKSNSLSE) form a disordered region. Phosphoserine is present on residues Ser-307, Ser-311, Ser-326, Ser-344, Ser-346, and Ser-356. The interval 381–433 (PQLDSNDSEIEDVNTLQGGGQPVVTPSVQPSLHPAHPALPQMTSQAPQPSVTG) is disordered. A compositionally biased stretch (polar residues) spans 421 to 433 (QMTSQAPQPSVTG). Coiled coils occupy residues 522–789 (AVSK…TDQA), 818–878 (DEHL…GVEA), and 925–951 (TLQL…AEER). At Ser-619 the chain carries Phosphoserine. A disordered region spans residues 739 to 761 (LEKNLSERKKKSAQERSQAEEEI). The tract at residues 931–1219 (QQEQEKEESS…DDDDDIDWLG (289 aa)) is disordered. Residues Ser-939, Ser-940, Ser-941, and Ser-956 each carry the phosphoserine modification. Residues 957–971 (QEQSASASSGQPQAP) are compositionally biased toward low complexity. Ser-979, Ser-1024, Ser-1056, Ser-1061, Ser-1065, and Ser-1097 each carry phosphoserine. Over residues 1090–1100 (QESSTRLSLTS) the composition is skewed to polar residues. Thr-1099 carries the post-translational modification Phosphothreonine. A Phosphoserine modification is found at Ser-1114. Over residues 1123–1139 (LKKDDVTSSTGPHKELS) the composition is skewed to basic and acidic residues. Phosphoserine is present on residues Ser-1158, Ser-1161, Ser-1162, Ser-1164, and Ser-1195. Thr-1203 bears the Phosphothreonine mark. Residues 1207–1219 (GDDDDDDDIDWLG) show a composition bias toward acidic residues.

It belongs to the FKBP-type PPIase family. As to quaternary structure, interacts with WIP and actin. Interacts with TBC1D23.

The protein resides in the cytoplasm. It is found in the cell projection. It localises to the axon. Its subcellular location is the early endosome. Its function is as follows. May be involved in the cytoskeletal organization of neuronal growth cones. Seems to be inactive as a PPIase. Involved in the transport of early endosomes at the level of transition between microfilament-based and microtubule-based movement. This is FK506-binding protein 15 (FKBP15) from Homo sapiens (Human).